We begin with the raw amino-acid sequence, 244 residues long: 2,5-diamino-6-ribosylamino-4(3H)-pyrimidinone 5'-phosphate reductase (244 aa).

Residues T79, D83, V159, and 182–186 (GANVI) each bind NADP(+).

It belongs to the HTP reductase family. In terms of assembly, homodimer.

The catalysed reaction is 2,5-diamino-6-(1-D-ribitylamino)pyrimidin-4(3H)-one 5'-phosphate + NADP(+) = 2,5-diamino-6-(1-D-ribosylamino)pyrimidin-4(3H)-one 5'-phosphate + NADPH + H(+). It catalyses the reaction 2,5-diamino-6-(1-D-ribitylamino)pyrimidin-4(3H)-one 5'-phosphate + NAD(+) = 2,5-diamino-6-(1-D-ribosylamino)pyrimidin-4(3H)-one 5'-phosphate + NADH + H(+). Its pathway is cofactor biosynthesis; riboflavin biosynthesis. Its function is as follows. Catalyzes an early step in riboflavin biosynthesis, the NADPH-dependent reduction of the ribose side chain of 2,5-diamino-6-ribosylamino-4(3H)-pyrimidinone 5'-phosphate, yielding 2,5-diamino-6-ribitylamino-4(3H)-pyrimidinone 5'-phosphate. This chain is 2,5-diamino-6-ribosylamino-4(3H)-pyrimidinone 5'-phosphate reductase (RIB7), found in Saccharomyces cerevisiae (strain ATCC 204508 / S288c) (Baker's yeast).